The chain runs to 230 residues: Porin OmpL (230 aa).

An N-terminal signal peptide occupies residues 1 to 20 (MKSLNTLVILTSVISTSVFA).

Belongs to the oligogalacturonate-specific porin KdgM (TC 1.B.35) family. OmpL subfamily.

It localises to the cell outer membrane. In terms of biological role, outer membrane channel protein that allows an efficient diffusion of low-molecular-weight solutes such as small sugars and tetraglycine. However, the specific substrate recognized by the OmpL channel is unknown. This chain is Porin OmpL (ompL), found in Salmonella typhi.